Reading from the N-terminus, the 444-residue chain is LETM1 domain-containing protein LETM2, mitochondrial (444 aa).

Residues 1 to 24 (MATYTCSVVLASLRCRSSHLVLRK) constitute a mitochondrion transit peptide. Residues 25 to 155 (NLCPIYTSVS…LMRTCADLFR (131 aa)) lie on the Mitochondrial intermembrane side of the membrane. Residues 73–94 (APPSPPPPSTPPSPPEPEKAPQ) are disordered. Residues 74-87 (PPSPPPPSTPPSPP) are compositionally biased toward pro residues. A helical transmembrane segment spans residues 156-176 (LVPFMVFVIVPFMEFLLPVFL). Residues 177-444 (KLFPEMLPST…ENTKASANGV (268 aa)) lie on the Mitochondrial matrix side of the membrane. Residues 199 to 417 (KKLAAKLEMA…TAPTLKGLKG (219 aa)) form the Letm1 RBD domain.

It is found in the mitochondrion inner membrane. The polypeptide is LETM1 domain-containing protein LETM2, mitochondrial (letm2) (Xenopus tropicalis (Western clawed frog)).